The following is a 581-amino-acid chain: Glutamyl-tRNA reductase (581 aa).

Residues 49 to 52 (TCNR), Ser109, 114 to 116 (EGQ), and Gln120 contribute to the substrate site. Cys50 acts as the Nucleophile in catalysis. 192–197 (GAGSMS) lines the NADP(+) pocket. Positions 292–416 (PAVEDTAVQE…AEAPRPQPVL (125 aa)) are insert.

Belongs to the glutamyl-tRNA reductase family. Homodimer.

The catalysed reaction is (S)-4-amino-5-oxopentanoate + tRNA(Glu) + NADP(+) = L-glutamyl-tRNA(Glu) + NADPH + H(+). It functions in the pathway porphyrin-containing compound metabolism; protoporphyrin-IX biosynthesis; 5-aminolevulinate from L-glutamyl-tRNA(Glu): step 1/2. In terms of biological role, catalyzes the NADPH-dependent reduction of glutamyl-tRNA(Glu) to glutamate 1-semialdehyde (GSA). The polypeptide is Glutamyl-tRNA reductase (Streptomyces coelicolor (strain ATCC BAA-471 / A3(2) / M145)).